The following is a 303-amino-acid chain: Probable 5-dehydro-4-deoxyglucarate dehydratase (303 aa).

This sequence belongs to the DapA family.

The enzyme catalyses 5-dehydro-4-deoxy-D-glucarate + H(+) = 2,5-dioxopentanoate + CO2 + H2O. It functions in the pathway carbohydrate acid metabolism; D-glucarate degradation; 2,5-dioxopentanoate from D-glucarate: step 2/2. The polypeptide is Probable 5-dehydro-4-deoxyglucarate dehydratase (Acinetobacter baumannii (strain ATCC 17978 / DSM 105126 / CIP 53.77 / LMG 1025 / NCDC KC755 / 5377)).